Here is a 379-residue protein sequence, read N- to C-terminus: Serpin B5 (379 aa).

N-linked (GlcNAc...) asparagine glycans are attached at residues Asn133, Asn176, and Asn361.

This sequence belongs to the serpin family. Ov-serpin subfamily.

It localises to the secreted. It is found in the extracellular space. May not exhibit serine protease inhibitory activity. The chain is Serpin B5 (serpinb5) from Xenopus tropicalis (Western clawed frog).